Reading from the N-terminus, the 729-residue chain is Phosphoribosylformylglycinamidine synthase subunit PurL (729 aa).

The active site involves His54. ATP is bound by residues Tyr57 and Lys96. Glu98 is a Mg(2+) binding site. Residues Ser99–His102 and Arg121 each bind substrate. Catalysis depends on His100, which acts as the Proton acceptor. A Mg(2+)-binding site is contributed by Asp122. Gln245 contributes to the substrate binding site. Asp273 serves as a coordination point for Mg(2+). Residue Glu317–Gln319 coordinates substrate. The ATP site is built by Asp495 and Gly532. Mg(2+) is bound at residue Asn533. Ser535 contacts substrate.

Belongs to the FGAMS family. Monomer. Part of the FGAM synthase complex composed of 1 PurL, 1 PurQ and 2 PurS subunits.

It is found in the cytoplasm. It carries out the reaction N(2)-formyl-N(1)-(5-phospho-beta-D-ribosyl)glycinamide + L-glutamine + ATP + H2O = 2-formamido-N(1)-(5-O-phospho-beta-D-ribosyl)acetamidine + L-glutamate + ADP + phosphate + H(+). The protein operates within purine metabolism; IMP biosynthesis via de novo pathway; 5-amino-1-(5-phospho-D-ribosyl)imidazole from N(2)-formyl-N(1)-(5-phospho-D-ribosyl)glycinamide: step 1/2. Its function is as follows. Part of the phosphoribosylformylglycinamidine synthase complex involved in the purines biosynthetic pathway. Catalyzes the ATP-dependent conversion of formylglycinamide ribonucleotide (FGAR) and glutamine to yield formylglycinamidine ribonucleotide (FGAM) and glutamate. The FGAM synthase complex is composed of three subunits. PurQ produces an ammonia molecule by converting glutamine to glutamate. PurL transfers the ammonia molecule to FGAR to form FGAM in an ATP-dependent manner. PurS interacts with PurQ and PurL and is thought to assist in the transfer of the ammonia molecule from PurQ to PurL. The chain is Phosphoribosylformylglycinamidine synthase subunit PurL from Staphylococcus aureus (strain Mu3 / ATCC 700698).